A 654-amino-acid polypeptide reads, in one-letter code: tRNA 5-methylaminomethyl-2-thiouridine biosynthesis bifunctional protein MnmC (654 aa).

The tract at residues 1–235 (MSDFQHAQLD…KREMLGGTYQ (235 aa)) is tRNA (mnm(5)s(2)U34)-methyltransferase. Positions 261–654 (VGGGLAGCAS…LRDLVRGQRG (394 aa)) are FAD-dependent cmnm(5)s(2)U34 oxidoreductase.

It in the N-terminal section; belongs to the methyltransferase superfamily. tRNA (mnm(5)s(2)U34)-methyltransferase family. In the C-terminal section; belongs to the DAO family. It depends on FAD as a cofactor.

It is found in the cytoplasm. It carries out the reaction 5-aminomethyl-2-thiouridine(34) in tRNA + S-adenosyl-L-methionine = 5-methylaminomethyl-2-thiouridine(34) in tRNA + S-adenosyl-L-homocysteine + H(+). Its function is as follows. Catalyzes the last two steps in the biosynthesis of 5-methylaminomethyl-2-thiouridine (mnm(5)s(2)U) at the wobble position (U34) in tRNA. Catalyzes the FAD-dependent demodification of cmnm(5)s(2)U34 to nm(5)s(2)U34, followed by the transfer of a methyl group from S-adenosyl-L-methionine to nm(5)s(2)U34, to form mnm(5)s(2)U34. In Pseudomonas paraeruginosa (strain DSM 24068 / PA7) (Pseudomonas aeruginosa (strain PA7)), this protein is tRNA 5-methylaminomethyl-2-thiouridine biosynthesis bifunctional protein MnmC.